A 121-amino-acid polypeptide reads, in one-letter code: Large ribosomal subunit protein bL19 (121 aa).

The protein belongs to the bacterial ribosomal protein bL19 family.

Functionally, this protein is located at the 30S-50S ribosomal subunit interface and may play a role in the structure and function of the aminoacyl-tRNA binding site. The polypeptide is Large ribosomal subunit protein bL19 (Amoebophilus asiaticus (strain 5a2)).